The sequence spans 328 residues: MPLHNLTRFPRLEFIGAPTPLEYLPRFSDYLGREIFIKRDDVTPMAMGGNKLRKLEFLAADALREGADTLITAGVIQSNHVRQTAAVAAKLGLHCVALLENPIGTTAENYLTNGNRLLLDLFNTQIEMCEALTDPNAQLEELATRVEAQGFRPYVIPVGGSNALGALGYVESALEIAQQCEGAVNISSVVVASGSAGTHAGLAVGLEHLMPESELIGVTVSRSVADQLPKVVNLQQAIAKELELTASAEIILWDDYFAPGYGVPNDEGMEAVKLLARLEGILLDPVYTGKAMAGLIGCISQKRFKDEGPILFIHTGGAPALFAYHPHV.

Lys51 bears the N6-(pyridoxal phosphate)lysine mark.

Belongs to the ACC deaminase/D-cysteine desulfhydrase family. As to quaternary structure, homodimer. The cofactor is pyridoxal 5'-phosphate.

It catalyses the reaction D-cysteine + H2O = hydrogen sulfide + pyruvate + NH4(+) + H(+). Functionally, catalyzes the alpha,beta-elimination reaction of D-cysteine and of several D-cysteine derivatives. It could be a defense mechanism against D-cysteine. This chain is D-cysteine desulfhydrase, found in Shigella sonnei (strain Ss046).